The primary structure comprises 215 residues: Na(+)-translocating NADH-quinone reductase subunit D (215 aa).

6 consecutive transmembrane segments (helical) span residues 14–34 (PFISNNPIMLQVLGICSALAV), 42–62 (FVMALAVTVVTGFSNLFISLI), 72–92 (IIVQMTIIASLVIVVDQLLKA), 103–123 (VFVGLIITNCIVMGRAEAYAM), 131–151 (FLDGIGNGLGYGFILLLVGTI), and 178–198 (NGMLLMPPSAFFLIGLFIWVL).

This sequence belongs to the NqrDE/RnfAE family. Composed of six subunits; NqrA, NqrB, NqrC, NqrD, NqrE and NqrF.

The protein resides in the cell inner membrane. It catalyses the reaction a ubiquinone + n Na(+)(in) + NADH + H(+) = a ubiquinol + n Na(+)(out) + NAD(+). NQR complex catalyzes the reduction of ubiquinone-1 to ubiquinol by two successive reactions, coupled with the transport of Na(+) ions from the cytoplasm to the periplasm. NqrA to NqrE are probably involved in the second step, the conversion of ubisemiquinone to ubiquinol. The polypeptide is Na(+)-translocating NADH-quinone reductase subunit D (Tolumonas auensis (strain DSM 9187 / NBRC 110442 / TA 4)).